A 415-amino-acid polypeptide reads, in one-letter code: Tyrosine--tRNA ligase (415 aa).

A 'HIGH' region motif is present at residues 54 to 63 (PTGRDIHLGH). Residues 248–252 (KMSKS) carry the 'KMSKS' region motif. An ATP-binding site is contributed by lysine 251. Residues 351–415 (AKAFYLLSAI…GKKTFRRLTR (65 aa)) form the S4 RNA-binding domain.

The protein belongs to the class-I aminoacyl-tRNA synthetase family. TyrS type 2 subfamily. Homodimer.

It is found in the cytoplasm. The enzyme catalyses tRNA(Tyr) + L-tyrosine + ATP = L-tyrosyl-tRNA(Tyr) + AMP + diphosphate + H(+). Its function is as follows. Catalyzes the attachment of tyrosine to tRNA(Tyr) in a two-step reaction: tyrosine is first activated by ATP to form Tyr-AMP and then transferred to the acceptor end of tRNA(Tyr). The polypeptide is Tyrosine--tRNA ligase (Prochlorococcus marinus (strain MIT 9313)).